Here is a 232-residue protein sequence, read N- to C-terminus: MPFTPIKLEAFGSREDLYDAAASVLVGALTTAVARHGRVGFAATGGTTPAPVYDRMATMTAPWDKVTVTLTDERFVPATDASSNEGLVRRHLLVGEAAKASFAPLFFDGVSHDESARKAEAGVNAATPFGVVLLGVGPDGHFASLFPGNPMLDQGLDLATDRSVLAVPPSDPAPDLPRLSLTLAALTRTDLIVLLVTGAAKKALLDGDVDPALPVAAILKQDRAKVRILWAE.

The protein belongs to the glucosamine/galactosamine-6-phosphate isomerase family. 6-phosphogluconolactonase subfamily.

It carries out the reaction 6-phospho-D-glucono-1,5-lactone + H2O = 6-phospho-D-gluconate + H(+). The protein operates within carbohydrate degradation; pentose phosphate pathway; D-ribulose 5-phosphate from D-glucose 6-phosphate (oxidative stage): step 2/3. Functionally, hydrolysis of 6-phosphogluconolactone to 6-phosphogluconate. The protein is 6-phosphogluconolactonase (pgl) of Caulobacter vibrioides (strain ATCC 19089 / CIP 103742 / CB 15) (Caulobacter crescentus).